The following is a 179-amino-acid chain: Large ribosomal subunit protein uL6 (179 aa).

Belongs to the universal ribosomal protein uL6 family. In terms of assembly, part of the 50S ribosomal subunit.

In terms of biological role, this protein binds to the 23S rRNA, and is important in its secondary structure. It is located near the subunit interface in the base of the L7/L12 stalk, and near the tRNA binding site of the peptidyltransferase center. This Prochlorococcus marinus (strain MIT 9312) protein is Large ribosomal subunit protein uL6.